A 537-amino-acid chain; its full sequence is ATP synthase subunit beta (537 aa).

Residues 1 to 61 (MAKAATSKKE…SSPQKGGKKG (61 aa)) are disordered. The span at 7 to 18 (SKKEASKVEAKK) shows a compositional bias: basic and acidic residues. A compositionally biased stretch (polar residues) spans 44–55 (NSPSRTGSSSPQ). 209–216 (GGAGVGKT) contacts ATP.

The protein belongs to the ATPase alpha/beta chains family. F-type ATPases have 2 components, CF(1) - the catalytic core - and CF(0) - the membrane proton channel. CF(1) has five subunits: alpha(3), beta(3), gamma(1), delta(1), epsilon(1). CF(0) has three main subunits: a(1), b(2) and c(9-12). The alpha and beta chains form an alternating ring which encloses part of the gamma chain. CF(1) is attached to CF(0) by a central stalk formed by the gamma and epsilon chains, while a peripheral stalk is formed by the delta and b chains.

The protein localises to the cell inner membrane. It carries out the reaction ATP + H2O + 4 H(+)(in) = ADP + phosphate + 5 H(+)(out). Its function is as follows. Produces ATP from ADP in the presence of a proton gradient across the membrane. The catalytic sites are hosted primarily by the beta subunits. The sequence is that of ATP synthase subunit beta from Bartonella bacilliformis (strain ATCC 35685 / KC583 / Herrer 020/F12,63).